Here is a 185-residue protein sequence, read N- to C-terminus: Anaphase-promoting complex subunit 10 (185 aa).

Residue Thr-2 is modified to N-acetylthreonine. Positions 2–185 (TTPNKTPPGA…IDFMMYRSIR (184 aa)) constitute a DOC domain. Position 169 is an N6-acetyllysine (Lys-169).

Belongs to the APC10 family. In terms of assembly, the mammalian APC/C is composed at least of 14 distinct subunits ANAPC1, ANAPC2, CDC27/APC3, ANAPC4, ANAPC5, CDC16/APC6, ANAPC7, CDC23/APC8, ANAPC10, ANAPC11, CDC26/APC12, ANAPC13, ANAPC15 and ANAPC16 that assemble into a complex of at least 19 chains with a combined molecular mass of around 1.2 MDa; APC/C interacts with FZR1 and FBXO5. The C-terminus of APC10 binds to CDC27/APC3. Interacts with PIWIL1; interaction only takes place when PIWIL1 binds piRNA. Interacts with FBXO43; the interaction is direct.

The protein operates within protein modification; protein ubiquitination. Functionally, component of the anaphase promoting complex/cyclosome (APC/C), a cell cycle-regulated E3 ubiquitin ligase that controls progression through mitosis and the G1 phase of the cell cycle. The APC/C complex acts by mediating ubiquitination and subsequent degradation of target proteins: it mainly mediates the formation of 'Lys-11'-linked polyubiquitin chains and, to a lower extent, the formation of 'Lys-48'- and 'Lys-63'-linked polyubiquitin chains. The APC/C complex catalyzes assembly of branched 'Lys-11'-/'Lys-48'-linked branched ubiquitin chains on target proteins. This is Anaphase-promoting complex subunit 10 (ANAPC10) from Bos taurus (Bovine).